The primary structure comprises 185 residues: ATP synthase subunit b 2 (185 aa).

The disordered stretch occupies residues 1–26 (MAQGHGDAKGTTAHTEAGGGHKAPFP). The chain crosses the membrane as a helical span at residues 37–57 (LVSLAIAFVALYLIVSKIALP).

This sequence belongs to the ATPase B chain family. F-type ATPases have 2 components, F(1) - the catalytic core - and F(0) - the membrane proton channel. F(1) has five subunits: alpha(3), beta(3), gamma(1), delta(1), epsilon(1). F(0) has three main subunits: a(1), b(2) and c(10-14). The alpha and beta chains form an alternating ring which encloses part of the gamma chain. F(1) is attached to F(0) by a central stalk formed by the gamma and epsilon chains, while a peripheral stalk is formed by the delta and b chains.

The protein localises to the cell inner membrane. F(1)F(0) ATP synthase produces ATP from ADP in the presence of a proton or sodium gradient. F-type ATPases consist of two structural domains, F(1) containing the extramembraneous catalytic core and F(0) containing the membrane proton channel, linked together by a central stalk and a peripheral stalk. During catalysis, ATP synthesis in the catalytic domain of F(1) is coupled via a rotary mechanism of the central stalk subunits to proton translocation. In terms of biological role, component of the F(0) channel, it forms part of the peripheral stalk, linking F(1) to F(0). The b'-subunit is a diverged and duplicated form of b found in plants and photosynthetic bacteria. This chain is ATP synthase subunit b 2 (atpF2), found in Rhodopseudomonas palustris (strain ATCC BAA-98 / CGA009).